A 377-amino-acid polypeptide reads, in one-letter code: SH2/SH3 adapter protein Nck1 (377 aa).

Residue Ala2 is modified to N-acetylalanine. The SH3 1 domain occupies 2-61 (AEEVVVVAKFDYVAQQEQELDIKKNERLWLLDDSKSWWRVRNSMNKTGFVPSNYVERKNS). Phosphoserine occurs at positions 85, 91, and 96. Position 105 is a phosphotyrosine (Tyr105). One can recognise an SH3 2 domain in the interval 106–165 (DLNMPAFVKFNYMAEREDELSLIKGTKVIVMEKCSDGWWRGSYNGQIGWFPSNYVTEEGD). Residue Ser166 is modified to Phosphoserine. In terms of domain architecture, SH3 3 spans 190–252 (QVLHVVQALY…PKNYVTIMQN (63 aa)). In terms of domain architecture, SH2 spans 282–376 (WYYGKVTRHQ…GEKLYLVKHL (95 aa)).

In terms of assembly, interacts (via SH2 domain and SH3 domain 2) with EGFR. Interacts with PAK1 and SOS1. Interacts (via SH3 domains) with PKN2. Associates with BLNK, PLCG1, VAV1 and NCK1 in a B-cell antigen receptor-dependent fashion. Interacts with SOCS7. This interaction is required for nuclear import. Part of a complex containing PPP1R15B, PP1 and NCK1. Interacts with RALGPS1. Interacts with CAV2 (tyrosine phosphorylated form). Interacts with ADAM15. Interacts with FASLG. Directly interacts with RASA1. Interacts with isoform 4 of MINK1. Interacts with FLT1 (tyrosine phosphorylated). Interacts with KDR (tyrosine phosphorylated). Interacts (via SH2 domain) with EPHB1; activates the JUN cascade to regulate cell adhesion. Interacts with EPHA2. Interacts (via SH2 domain) with PDGFRB (tyrosine phosphorylated). Interacts with the inactive form of EIF2AK2/PKR. Interacts with PTPN1. Interacts with INSR/insulin receptor (in response to insulin stimulation); this interaction may mediate PTPN1 recruitment leading to INSR dephosphorylation. Interacts with CD3E (via Proline-rich sequence); the interaction is ligand dependent but independent of tyrosine kinase activation. Interacts with EGFR. Interacts with IRS1. In terms of processing, phosphorylated on Ser and Tyr residues. Phosphorylated in response to activation of EGFR and FcERI. Phosphorylated by activated PDGFRB.

Its subcellular location is the cytoplasm. It is found in the endoplasmic reticulum. The protein resides in the nucleus. In terms of biological role, adapter protein which associates with tyrosine-phosphorylated growth factor receptors, such as KDR and PDGFRB, or their cellular substrates. Maintains low levels of EIF2S1 phosphorylation by promoting its dephosphorylation by PP1. Plays a role in the DNA damage response, not in the detection of the damage by ATM/ATR, but for efficient activation of downstream effectors, such as that of CHEK2. Plays a role in ELK1-dependent transcriptional activation in response to activated Ras signaling. Modulates the activation of EIF2AK2/PKR by dsRNA. May play a role in cell adhesion and migration through interaction with ephrin receptors. Also acts as an adpater protein for the T cell receptor complex (TCR-CD3E). Upon ligand engagement, is recruited by CD3E and promotes maturation of the immune synapse and T cell activation. This chain is SH2/SH3 adapter protein Nck1 (Nck1), found in Mus musculus (Mouse).